Here is a 360-residue protein sequence, read N- to C-terminus: MIDIPKRDTQADKDFSKLTFKLSKHKLKKTKKFDETSKFSTLHEAVNGNIQLFQEKKMKLENGVNTKKTEEKIKQIEEDEINYLLDTIPFIKEYDVKETVSDVTEQNSVFQVKSKNTHTNTFRKYLFHVEKVSNPTTLDAVTDRETVDQIYTCTCGGQMELWVNSTQSDLVCNECGATQPYIETYSGKESNEGMAYKRINHLAECLNALQGKEGTNVPQEVINAVKAEFKKNRISTTSEIKPSKVKQFLKKLGYSMYYENIYTIANMISGIPTLKLSRELEKRLKDMFFEIQEPFFRHKPPKRKNFLSYNYVLYKFSELLGEDDLLQYFPLLKCPKNLHNQDVIWKKICNDLQWEFIATV.

A zinc finger spans residues 153–175 (CTCGGQMELWVNSTQSDLVCNEC).

Belongs to the nucleo-cytoplasmic large DNA viruses (NCLDVs) VLTF-3 family.

In terms of biological role, putative transcription factor. This chain is Putative transcription factor A494R, found in Paramecium bursaria Chlorella virus 1 (PBCV-1).